The following is a 292-amino-acid chain: Tricin synthase 2 (292 aa).

A disordered region spans residues Arg21–Gly46. Polar residues predominate over residues Thr23–Ala32. Residues Ser108, Glu130, Gly132–Val133, Ser138, Asp156, and Ala185 contribute to the S-adenosyl-L-methionine site. Asp208 contributes to the a divalent metal cation binding site. Asp210 contributes to the S-adenosyl-L-methionine binding site. 2 residues coordinate a divalent metal cation: Asp234 and Asn235.

Belongs to the class I-like SAM-binding methyltransferase superfamily. Cation-dependent O-methyltransferase family. CCoAMT subfamily. The cofactor is Mg(2+). It depends on Mn(2+) as a cofactor. As to expression, expressed in stems only.

It catalyses the reaction tricetin + 2 S-adenosyl-L-methionine = 3',5'-di-O-methyltricetin + 2 S-adenosyl-L-homocysteine + 2 H(+). Catalyzes the stepwise methylation of tricetin to its 3'-mono- and 3',5'-dimethyl ethers. No 3',4',5'-trimethylated ester derivatives are produced. Can use caffeoyl CoA, 5-hydroxyferulic acid, luteolin, tricetin, quercetin, myrcetin and 7,8-dihydroxyflavone as substrates, but not naringenin, apigenin or kaempferol. The 2,3-double bond and the O-dihydroxyl group of the substrate are both required for catalytic activity of the enzyme. This is Tricin synthase 2 (ROMT-17) from Oryza sativa subsp. japonica (Rice).